The chain runs to 262 residues: Ribosome biogenesis GTPase A (262 aa).

Residues 12–157 (KRQIKDLLRL…ILDTPGILYK (146 aa)) form the CP-type G domain. GTP is bound by residues 54–57 (NKVD), 109–114 (NTGKST), and Gly-153.

This sequence belongs to the TRAFAC class YlqF/YawG GTPase family. MTG1 subfamily.

The protein resides in the cytoplasm. Functionally, required for a late step of 50S ribosomal subunit assembly. Has GTPase activity. Binds to the 23S rRNA. The sequence is that of Ribosome biogenesis GTPase A from Thermotoga maritima (strain ATCC 43589 / DSM 3109 / JCM 10099 / NBRC 100826 / MSB8).